A 112-amino-acid polypeptide reads, in one-letter code: Putative pterin-4-alpha-carbinolamine dehydratase (112 aa).

Belongs to the pterin-4-alpha-carbinolamine dehydratase family.

It carries out the reaction (4aS,6R)-4a-hydroxy-L-erythro-5,6,7,8-tetrahydrobiopterin = (6R)-L-erythro-6,7-dihydrobiopterin + H2O. The chain is Putative pterin-4-alpha-carbinolamine dehydratase from Shewanella piezotolerans (strain WP3 / JCM 13877).